The chain runs to 143 residues: uncharacterized protein (143 aa).

An N-terminal signal peptide occupies residues methionine 1–alanine 27.

This is an uncharacterized protein from Mycobacterium tuberculosis (strain CDC 1551 / Oshkosh).